The following is an 88-amino-acid chain: LYR motif-containing protein 2 (88 aa).

Residues 1–19 (MAVSRLPPAALSLKQFLQR) constitute a mitochondrion transit peptide.

The protein belongs to the complex I LYR family.

It localises to the mitochondrion. Involved in efficient integration of the N-module into mitochondrial respiratory chain complex I. The chain is LYR motif-containing protein 2 (lyrm2) from Danio rerio (Zebrafish).